The following is a 527-amino-acid chain: Glutamate--cysteine ligase (527 aa).

This sequence belongs to the glutamate--cysteine ligase type 1 family. Type 1 subfamily.

It catalyses the reaction L-cysteine + L-glutamate + ATP = gamma-L-glutamyl-L-cysteine + ADP + phosphate + H(+). It participates in sulfur metabolism; glutathione biosynthesis; glutathione from L-cysteine and L-glutamate: step 1/2. The sequence is that of Glutamate--cysteine ligase from Pseudomonas paraeruginosa (strain DSM 24068 / PA7) (Pseudomonas aeruginosa (strain PA7)).